Here is a 141-residue protein sequence, read N- to C-terminus: Zinc finger HIT domain-containing protein 3 (141 aa).

The HIT-type; degenerate zinc-finger motif lies at 1–28 (LEKPKYRCPACRVPYCSVACFRKHKEQC). Zn(2+) contacts are provided by C8, C11, H24, and C28. The residue at position 66 (S66) is a Phosphoserine.

In terms of assembly, thyroid receptor interacting proteins (TRIPs) specifically interact with the ligand binding domain of the thyroid receptor (TR). Requires the presence of thyroid hormone for its interaction. Interacts with NUFIP1. Interacts (via HIT-type zinc finger) with the RUVBL1/RUVBL2 complex in the presence of ADP.

Its subcellular location is the cytoplasm. It localises to the nucleus. The polypeptide is Zinc finger HIT domain-containing protein 3 (ZNHIT3) (Pan troglodytes (Chimpanzee)).